A 66-amino-acid chain; its full sequence is Conotoxin Cl14.1a (66 aa).

An N-terminal signal peptide occupies residues 1–19 (MNVTAMFIVLLLTMPLTDG). Positions 20 to 49 (FNIRAINGGELFGLVQRDAGNALDHGFYRR) are excised as a propeptide.

This sequence belongs to the conotoxin L superfamily. In terms of processing, contains 2 disulfide bonds. Expressed by the venom duct.

It is found in the secreted. Probable neurotoxin with unknown target. Possibly targets ion channels. This peptide could be considered as an apoptosis activator in some cancers (tested on lung and breast cancer cell lines). Provokes the decrease of H1299 lung cancer cells viability after 24 hours treatment, and induces a high Bax/Bcl-2 ratio, which suggests that this peptide can activate apoptosis in H1299 cells. In addition, H1299 and H1437 lung cancer cell lines treated with this peptide have decreased cell viability, activated caspases, and reduced expression of the pro-survival protein NF-kappa-B (NFKB1), indicating activation of apoptosis. In synergy with MicroRNA-101-3p, this synthetic peptide inhibits breast cancer cells (SK-BR-3 and MCF-7) migration, invasion, and proliferation through suppressing the expression of the methyltransferase EZH2. In parallel, this synergy treatment is able to promote the apoptosis of breast cancer cells. Against microbes, this synthetic toxin (at micromolar concentrations) lowers viability and inhibits host cell invasion by the opportunistic parasite Toxoplasma gondii (tachyzoite form). In addition, it permits T.gondii intracellular replication to decrease while viability of the host cell is unaffected. The sequence is that of Conotoxin Cl14.1a from Californiconus californicus (California cone).